A 103-amino-acid chain; its full sequence is Small ribosomal subunit protein uS10 (103 aa).

Belongs to the universal ribosomal protein uS10 family. Part of the 30S ribosomal subunit.

Involved in the binding of tRNA to the ribosomes. The protein is Small ribosomal subunit protein uS10 of Bordetella petrii (strain ATCC BAA-461 / DSM 12804 / CCUG 43448).